The primary structure comprises 385 residues: MWGFRLLRSPPLLLLLPQLGIGNASSCSQARTMNPGGSGGARCSLSAEVRRRQCLQLSTVPGADPQRSNELLLLAAAGEGLERQDLPGDPAKEEPQPPPQHHVLYFPGDVQNYHEIMTRHPENYQWENWSLENVATILAHRFPNSYIWVIKCSRMHLHKFSCYDNFVKSNMFGAPEHNTDFGAFKHLYMLLVNAFNLSQNSLSKKSLNVWNKDSIASNCRSSPSHTTNGCQGEKVRTCEKSDESAMSFYPPSLNDASFTLIGFSKGCVVLNQLLFELKEAKKDKNIDAFIKSIRTMYWLDGGHSGGSNTWVTYPEVLKEFAQTGIIVHTHVTPYQVRDPMRSWIGKEHKKFVQILGDLGMQVTSQIHFTKEAPSIENHFRVHEVF.

A mitochondrion-targeting transit peptide spans 1–24 (MWGFRLLRSPPLLLLLPQLGIGNA).

Belongs to the C2orf69 family.

The protein resides in the mitochondrion matrix. Its function is as follows. May play a role in the respiratory chain. This is Mitochondrial protein C2orf69 (C2orf69) from Homo sapiens (Human).